The following is a 383-amino-acid chain: uncharacterized protein (383 aa).

This sequence belongs to the peptidase M20 family.

This is an uncharacterized protein from Staphylococcus aureus (strain USA300).